The sequence spans 257 residues: 5'-nucleotidase SurE (257 aa).

4 residues coordinate a divalent metal cation: aspartate 9, aspartate 10, serine 42, and asparagine 96.

This sequence belongs to the SurE nucleotidase family. A divalent metal cation is required as a cofactor.

It is found in the cytoplasm. It catalyses the reaction a ribonucleoside 5'-phosphate + H2O = a ribonucleoside + phosphate. In terms of biological role, nucleotidase that shows phosphatase activity on nucleoside 5'-monophosphates. The sequence is that of 5'-nucleotidase SurE from Campylobacter lari (strain RM2100 / D67 / ATCC BAA-1060).